A 233-amino-acid polypeptide reads, in one-letter code: Pilin-like protein PilA3 (233 aa).

A propeptide spans 1-4 (leader sequence); the sequence is MKRG. Position 5 is an N-methylphenylalanine (F5). Residues 5–25 traverse the membrane as a helical segment; the sequence is FTLVEVLVAMAILVVVLAVGV. The disordered stretch occupies residues 121 to 143; it reads LRRSDVNATPSSGSDCTTPPPNS. Positions 126 to 137 are enriched in polar residues; sequence VNATPSSGSDCT.

The protein resides in the cell inner membrane. The protein localises to the cell outer membrane. It is found in the periplasm. Functionally, plays an essential role in natural DNA transformation but is not required for pilus biogenesis. The polypeptide is Pilin-like protein PilA3 (pilA3) (Thermus thermophilus (strain ATCC BAA-163 / DSM 7039 / HB27)).